We begin with the raw amino-acid sequence, 2892 residues long: E3 ubiquitin-protein ligase lubel (2892 aa).

8 disordered regions span residues 23 to 55 (DRIG…KSTP), 125 to 252 (KQHM…QLEK), 395 to 423 (SQQH…QFGS), 483 to 631 (PSAA…ESEG), 644 to 672 (QKLQ…ENTQ), 685 to 737 (AHEE…PDHE), 757 to 865 (CCKT…DNSL), and 949 to 975 (DRFT…QQES). The segment covering 40 to 52 (GLPKAPALPPKAK) has biased composition (low complexity). Gly residues predominate over residues 189-198 (GWRGSLGGGA). The span at 206-215 (ATSSANQMNN) shows a compositional bias: polar residues. Composition is skewed to low complexity over residues 402 to 412 (AQHPHQALPQH) and 483 to 503 (PSAA…TPSR). Positions 516–528 (VDDELTDDEDSDQ) are enriched in acidic residues. Residues 535–546 (VSNRSGMTSASR) are compositionally biased toward polar residues. Basic residues predominate over residues 547-560 (SQHHQNHIQPRQRR). Residues 606-623 (GTLTRNKTATDSARTSRI) are compositionally biased toward polar residues. A compositionally biased stretch (basic and acidic residues) spans 647–670 (QEADQHKSSKKAEPKRKPEMKDEN). Residues 801-813 (KPTTKSQQPSQKS) are compositionally biased toward polar residues. Composition is skewed to low complexity over residues 818–837 (SKTT…AVNS) and 846–856 (KTPSKSTLKTS). One can recognise a UBA-like 1 domain in the interval 1042 to 1187 (MHIILKELEL…LMRIWGSPNG (146 aa)). Disordered stretches follow at residues 1214–1252 (LQPP…SPYQ), 1477–1520 (LPTA…KLET), 1557–1653 (AEVQ…KILS), 1717–2019 (STTI…NLSE), 2032–2082 (RDEI…EGNT), 2191–2316 (SAPP…PLRS), and 2411–2431 (DYET…EPQK). Residues 1241–1252 (VKSTYATPSPYQ) show a composition bias toward polar residues. Residues 1510-1519 (EELRQQEKLE) show a composition bias toward basic and acidic residues. Polar residues predominate over residues 1560-1571 (QVQSDDQPSTSR). Positions 1576–1587 (RAKRSQQSRKGR) are enriched in basic residues. Residues 1595-1607 (PTNRTKLPNNIDQ) show a composition bias toward polar residues. Positions 1608 to 1627 (KVNESKTAAKETEAVKDKDL) are enriched in basic and acidic residues. 3 stretches are compositionally biased toward polar residues: residues 1630-1653 (AASN…KILS), 1717-1726 (STTISEQSEG), and 1764-1779 (KSPT…TSHI). Residues 1822 to 1834 (LSSSSLRSESRSS) show a composition bias toward low complexity. Residues 1859-1881 (TVSSPKSEQLSDNQEVNLVSQET) show a composition bias toward polar residues. A compositionally biased stretch (acidic residues) spans 1918-1927 (DSDEVFEDAP). Residues 1953-1963 (DGQRAETKSPE) show a composition bias toward basic and acidic residues. 2 stretches are compositionally biased toward acidic residues: residues 1964–1975 (DEVVILLDEESQ) and 2036–2079 (SMDE…DGEE). 2 stretches are compositionally biased toward low complexity: residues 2214-2230 (PSEV…ALPI) and 2269-2291 (SGTA…TVSK). Positions 2297–2308 (NEPTNKSNSTPL) are enriched in polar residues. Residues 2411–2425 (DYETSATEEEQEEPN) are compositionally biased toward acidic residues. The UBA-like 2 domain occupies 2457–2513 (DPAILARKYVDQELVTNIAEAQIAATLVSMKFSEDVALWAARECSDLDQAIAMLQQE). The segment at 2510–2748 (LQQECELCMN…LGLHAHHPRN (239 aa)) is TRIAD supradomain. 14 residues coordinate Zn(2+): Cys2514, Cys2517, Cys2537, Cys2540, Cys2618, Cys2621, Cys2636, Cys2639, Cys2644, Cys2647, His2655, Cys2660, Cys2690, and Cys2693. An RING-type 1 zinc finger spans residues 2514–2564 (CELCMNSYPMNQMVSMLKCLHKCCKQCAKSYFTVQITDRSINDCSCPFCKL). The tract at residues 2514 to 2892 (CELCMNSYPM…IKKHIPLKSA (379 aa)) is necessary for linear polyubiquitination and sufficent for inducing DptA in the intestine. An IBR-type zinc finger spans residues 2601-2660 (QRKLRDRSLLQDPNFKWCIQCSSGFFARPKQKRLICPDCGSVTCAQCRKPWERQHEGSSC). An RING-type 2; atypical zinc finger spans residues 2690 to 2720 (CPKCKFRYSLARGGCMHFTCTQCKFEFCYGC). Cys2704 is a catalytic residue. 2 residues coordinate Zn(2+): Cys2709 and Cys2712.

It belongs to the RBR family.

The enzyme catalyses [E2 ubiquitin-conjugating enzyme]-S-ubiquitinyl-L-cysteine + [acceptor protein]-L-lysine = [E2 ubiquitin-conjugating enzyme]-L-cysteine + [acceptor protein]-N(6)-ubiquitinyl-L-lysine.. Its function is as follows. E3 ubiquitin-protein ligase which conjugates linear 'Met-1'- and 'Lys-63'-linked polyubiquitin chains to substrates and plays a crucial role in the NF-kappa-B intestinal inflammatory response to oral infection and in the heat stress response. Preferentially interacts with 'Lys-63'-linked, and to a lesser extent 'Lys-48'-linked, polyubiquitin chains. Upon oral infection with a Gram-negative bacterium E.carotovora subsp. carotovora 15, functions with the E2 ubiquitin-conjugating enzyme Ubc10 to mediate the conjugation of 'Lys-63'- and linear 'Met-1'-linked polyubiquitin chains to the substrate key which is essential for activation of the NF-kappa-B signaling cascade in the adult intestinal epithelium. It is not required for systemic immune response to septic infection with either E.carotovora subsp. carotovora 15 or Gram-positive M.luteus bacteria. Function in controlling linear ubiquitination is also essential for regulating the heat stress response in adults. This function may require the E2 ubiquitin-conjugating enzymes Ubc10 or eff. The protein is E3 ubiquitin-protein ligase lubel of Drosophila melanogaster (Fruit fly).